The primary structure comprises 292 residues: Probable starch degradation products transport system permease protein AmyD (292 aa).

6 helical membrane passes run 15–35, 77–97, 110–130, 156–176, 205–225, and 260–280; these read WLFI…PFII, FAVA…MLVT, FYLP…FIFV, FWGL…VIYI, VFPL…SNSF, and MAVG…ISVI. The ABC transmembrane type-1 domain maps to 71-281; that stretch reads IIFTAKFAVA…LIIAVISVIQ (211 aa).

The protein belongs to the binding-protein-dependent transport system permease family. MalFG subfamily.

It is found in the cell membrane. Its function is as follows. Probably part of a binding-protein-dependent transport system starch degradation products. Probably responsible for the translocation of the substrate across the membrane. The chain is Probable starch degradation products transport system permease protein AmyD (amyD) from Thermoanaerobacterium thermosulfurigenes (Clostridium thermosulfurogenes).